The chain runs to 64 residues: MATKTVRIEQIGSPIRREASQRATLIGLKLNKLHRVSELEDTPSVRGMIRKVAHLVRVLDDAAA.

Belongs to the universal ribosomal protein uL30 family. Part of the 50S ribosomal subunit.

The chain is Large ribosomal subunit protein uL30 from Methylorubrum populi (strain ATCC BAA-705 / NCIMB 13946 / BJ001) (Methylobacterium populi).